A 151-amino-acid polypeptide reads, in one-letter code: MLP-like protein 168 (151 aa).

This sequence belongs to the MLP family.

This Arabidopsis thaliana (Mouse-ear cress) protein is MLP-like protein 168 (MLP168).